The sequence spans 380 residues: tRNA(Met) cytidine acetate ligase (380 aa).

ATP-binding positions include 7 to 20 (IAEY…HLYQ), G101, N151, and R176.

The protein belongs to the TmcAL family.

It localises to the cytoplasm. The catalysed reaction is cytidine(34) in elongator tRNA(Met) + acetate + ATP = N(4)-acetylcytidine(34) in elongator tRNA(Met) + AMP + diphosphate. In terms of biological role, catalyzes the formation of N(4)-acetylcytidine (ac(4)C) at the wobble position of elongator tRNA(Met), using acetate and ATP as substrates. First activates an acetate ion to form acetyladenylate (Ac-AMP) and then transfers the acetyl group to tRNA to form ac(4)C34. The polypeptide is tRNA(Met) cytidine acetate ligase (Ligilactobacillus salivarius (strain UCC118) (Lactobacillus salivarius)).